The primary structure comprises 469 residues: 3-isopropylmalate dehydratase large subunit (469 aa).

Residues cysteine 349, cysteine 409, and cysteine 412 each contribute to the [4Fe-4S] cluster site. Positions 424-443 are disordered; that stretch reads QISASSSNRNFKGRQGSPSG.

The protein belongs to the aconitase/IPM isomerase family. LeuC type 1 subfamily. In terms of assembly, heterodimer of LeuC and LeuD. [4Fe-4S] cluster is required as a cofactor.

It catalyses the reaction (2R,3S)-3-isopropylmalate = (2S)-2-isopropylmalate. It functions in the pathway amino-acid biosynthesis; L-leucine biosynthesis; L-leucine from 3-methyl-2-oxobutanoate: step 2/4. In terms of biological role, catalyzes the isomerization between 2-isopropylmalate and 3-isopropylmalate, via the formation of 2-isopropylmaleate. This chain is 3-isopropylmalate dehydratase large subunit, found in Thermosynechococcus vestitus (strain NIES-2133 / IAM M-273 / BP-1).